A 408-amino-acid chain; its full sequence is Peptidase T (408 aa).

His-81 serves as a coordination point for Zn(2+). The active site involves Asp-83. Residue Asp-142 participates in Zn(2+) binding. Glu-176 acts as the Proton acceptor in catalysis. Zn(2+) is bound by residues Glu-177, Asp-199, and His-381.

The protein belongs to the peptidase M20B family. The cofactor is Zn(2+).

The protein localises to the cytoplasm. The enzyme catalyses Release of the N-terminal residue from a tripeptide.. In terms of biological role, cleaves the N-terminal amino acid of tripeptides. This is Peptidase T from Streptococcus gordonii (strain Challis / ATCC 35105 / BCRC 15272 / CH1 / DL1 / V288).